Consider the following 527-residue polypeptide: Protein IQ-DOMAIN 4 (527 aa).

The segment at 13-90 is disordered; sequence CLSPGKDKKN…PPSPPPPPPA (78 aa). Residues 17–26 are compositionally biased toward basic and acidic residues; sequence GKDKKNQKPE. A compositionally biased stretch (pro residues) spans 63-90; the sequence is PYPPPPPLPDFAPQPLLPPPSPPPPPPA. The IQ domain maps to 147-175; sequence EETAAIKIQNAYRCYTARRTLRALRGMAR. The calmodulin-binding stretch occupies residues 256–273; sequence RSVNRKEASVRRERALAY. The disordered stretch occupies residues 323–527; that stretch reads VSVKSSLKRE…EKKRRNGGSS (205 aa). The segment covering 335–360 has biased composition (polar residues); that stretch reads IKSSPARSKTQKSASQSSIQWPVNND. Residues 361–370 are compositionally biased toward basic and acidic residues; it reads TKSRKIEVTN. Composition is skewed to polar residues over residues 399-422 and 437-455; these read LDNT…NAQT and NTKT…NLAN. Basic and acidic residues predominate over residues 471–481; that stretch reads PKKEVVADKKK. Residues 478 to 485 carry the Nuclear localization signal motif; sequence DKKKPPQM.

The protein belongs to the IQD family. In terms of assembly, binds to multiple calmodulin (CaM) in the presence of Ca(2+) and CaM-like proteins.

It localises to the nucleus. The protein localises to the nucleolus. Functionally, may be involved in cooperative interactions with calmodulins or calmodulin-like proteins. Recruits calmodulin proteins to microtubules, thus being a potential scaffold in cellular signaling and trafficking. May associate with nucleic acids and regulate gene expression at the transcriptional or post-transcriptional level. In Arabidopsis thaliana (Mouse-ear cress), this protein is Protein IQ-DOMAIN 4.